We begin with the raw amino-acid sequence, 383 residues long: Protein arginine N-methyltransferase PRMT10 (383 aa).

The interval 1–23 is disordered; the sequence is MRSSQNGGAMGGRAAGTGGGGPS. Positions 8–22 are enriched in gly residues; that stretch reads GAMGGRAAGTGGGGP. An SAM-dependent MTase PRMT-type domain is found at 29–360; sequence EVDYAQYFCT…KENHRLMEIE (332 aa). S-adenosyl-L-methionine-binding residues include glutamine 45, arginine 54, glycine 78, glutamate 100, and glutamate 129. Active-site residues include glutamate 143 and glutamate 152. Positions 190-230 are dimerization arm; sequence DRKRNDFDGAMADWHNFSDEIKSYYGVDMGVLTKPFAEEQE.

It belongs to the class I-like SAM-binding methyltransferase superfamily. Protein arginine N-methyltransferase family. Ring-like homodimer.

The catalysed reaction is L-arginyl-[protein] + 2 S-adenosyl-L-methionine = N(omega),N(omega)-dimethyl-L-arginyl-[protein] + 2 S-adenosyl-L-homocysteine + 2 H(+). In terms of biological role, methylates (mono and asymmetric dimethylation) the guanidino nitrogens of arginyl residues in some proteins. Essential for regulating flowering time. This chain is Protein arginine N-methyltransferase PRMT10 (PRMT10), found in Arabidopsis thaliana (Mouse-ear cress).